Here is a 618-residue protein sequence, read N- to C-terminus: Dihydroxy-acid dehydratase (618 aa).

Mg(2+) is bound at residue Asp-81. Cys-122 is a [2Fe-2S] cluster binding site. Mg(2+)-binding residues include Asp-123 and Lys-124. Lys-124 carries the N6-carboxylysine modification. Residue Cys-195 coordinates [2Fe-2S] cluster. Glu-493 contacts Mg(2+). The active-site Proton acceptor is Ser-519.

It belongs to the IlvD/Edd family. As to quaternary structure, homodimer. [2Fe-2S] cluster serves as cofactor. Mg(2+) is required as a cofactor.

The catalysed reaction is (2R)-2,3-dihydroxy-3-methylbutanoate = 3-methyl-2-oxobutanoate + H2O. It catalyses the reaction (2R,3R)-2,3-dihydroxy-3-methylpentanoate = (S)-3-methyl-2-oxopentanoate + H2O. Its pathway is amino-acid biosynthesis; L-isoleucine biosynthesis; L-isoleucine from 2-oxobutanoate: step 3/4. It functions in the pathway amino-acid biosynthesis; L-valine biosynthesis; L-valine from pyruvate: step 3/4. Its function is as follows. Functions in the biosynthesis of branched-chain amino acids. Catalyzes the dehydration of (2R,3R)-2,3-dihydroxy-3-methylpentanoate (2,3-dihydroxy-3-methylvalerate) into 2-oxo-3-methylpentanoate (2-oxo-3-methylvalerate) and of (2R)-2,3-dihydroxy-3-methylbutanoate (2,3-dihydroxyisovalerate) into 2-oxo-3-methylbutanoate (2-oxoisovalerate), the penultimate precursor to L-isoleucine and L-valine, respectively. The sequence is that of Dihydroxy-acid dehydratase from Shewanella amazonensis (strain ATCC BAA-1098 / SB2B).